Here is a 189-residue protein sequence, read N- to C-terminus: Frataxin-like protein, mitochondrial (189 aa).

A mitochondrion-targeting transit peptide spans 1–50 (MNCARLHQRIPLRAMALTTTSYPALAPSHSFANASTSVMTASAMAVAHRA).

This sequence belongs to the frataxin family. Interacts with IscU; the interaction is direct.

Its subcellular location is the mitochondrion. The enzyme catalyses 4 Fe(2+) + O2 + 4 H(+) = 4 Fe(3+) + 2 H2O. Functionally, iron-binding protein which binds 2 iron atoms per monomer. Probably, acts as an iron carrier for the biosynthesis of Fe-S clusters. Stimulates the cysteine desulphurase activity of IscS in the presence of IscU. The protein is Frataxin-like protein, mitochondrial of Leishmania donovani.